A 406-amino-acid chain; its full sequence is Acetyltransferase sirH (406 aa).

Transmembrane regions (helical) follow at residues 9–29 (IFIE…FALG), 32–52 (AHTF…CQSL), 63–83 (LLSN…WILL), 295–315 (VQLF…ALLC), 323–343 (SALF…HVIA), and 358–378 (FIGF…WVGS).

The protein belongs to the wax synthase family.

It localises to the membrane. Its pathway is mycotoxin biosynthesis. Its function is as follows. Acetyltransferase; part of the gene cluster that mediates the biosynthesis of sirodesmin PL, an epipolythiodioxopiperazine (ETP) characterized by a disulfide bridged cyclic dipeptide and that acts as a phytotoxin which is involved in the blackleg didease of canola. SirD catalyzes the O-prenylation of L-tyrosine (L-Tyr) in the presence of dimethylallyl diphosphate (DMAPP) to yield 4-O-dimethylallyl-L-Tyr, and therefore represents probably the first pathway-specific enzyme in the biosynthesis of sirodesmin PL. 4-O-dimethylallyl-L-Tyr, then undergoes condensation with L-Ser in a reaction catalyzed by the non-ribosomal peptide synthase sirP to form the diketopiperazine (DKP) backbone. Further bishydroxylation of the DKP performed by the cytochrome P450 monooxygenase sirC leads to the production of the intermediate phomamide. This step is essential to form the reactive thiol group required for toxicity of sirodesmin PL. The next steps of sirodesmin biosynthesis are not well understood yet, but some predictions could be made from intermediate compounds identification. Phomamide is converted into phomalizarine via oxidation, probably by sirT. Further oxidation, methylation (by sirM or sirN) and reduction steps convert phomalizarine to deacetyl sirodesmin. Finally, acetyltransferase sirH probably acetylates deacetyl sirodesmin to produce sirodesmin PL. In Leptosphaeria maculans (Blackleg fungus), this protein is Acetyltransferase sirH.